The following is a 268-amino-acid chain: Nickel import ATP-binding protein NikE (268 aa).

In terms of domain architecture, ABC transporter spans 4 to 252; that stretch reads LNVSDLSHHY…SSDAGRVLQN (249 aa). Position 45–52 (45–52) interacts with ATP; it reads GRSGCGKS.

The protein belongs to the ABC transporter superfamily. Nickel importer (TC 3.A.1.5.3) family. In terms of assembly, the complex is composed of two ATP-binding proteins (NikD and NikE), two transmembrane proteins (NikB and NikC) and a solute-binding protein (NikA).

Its subcellular location is the cell inner membrane. The catalysed reaction is Ni(2+)(out) + ATP + H2O = Ni(2+)(in) + ADP + phosphate + H(+). Part of the ABC transporter complex NikABCDE involved in nickel import. Responsible for energy coupling to the transport system. The sequence is that of Nickel import ATP-binding protein NikE from Shigella dysenteriae serotype 1 (strain Sd197).